The chain runs to 177 residues: Adenine phosphoribosyltransferase (177 aa).

This sequence belongs to the purine/pyrimidine phosphoribosyltransferase family. Homodimer.

The protein resides in the cytoplasm. The enzyme catalyses AMP + diphosphate = 5-phospho-alpha-D-ribose 1-diphosphate + adenine. It functions in the pathway purine metabolism; AMP biosynthesis via salvage pathway; AMP from adenine: step 1/1. Functionally, catalyzes a salvage reaction resulting in the formation of AMP, that is energically less costly than de novo synthesis. The sequence is that of Adenine phosphoribosyltransferase from Chlorobium luteolum (strain DSM 273 / BCRC 81028 / 2530) (Pelodictyon luteolum).